A 241-amino-acid polypeptide reads, in one-letter code: Ras-like protein 1 (241 aa).

Residues 17 to 22, 33 to 39, 63 to 64, 138 to 141, and 168 to 170 each bind GTP; these read GVGKTA, VETYDPT, AG, NKSD, and SAK. An Effector region motif is present at residues 36–44; sequence YDPTIEDSY. A disordered region spans residues 190 to 241; the sequence is RQQASRPSLPGNSRTKTGGMGKSESFYQSDGKRGSRKDGEKHRSKPIKCVIL. A compositionally biased stretch (polar residues) spans 191–205; the sequence is QQASRPSLPGNSRTK. The segment covering 219–230 has biased composition (basic and acidic residues); it reads DGKRGSRKDGEK. Cysteine 238 carries the cysteine methyl ester modification. The S-farnesyl cysteine moiety is linked to residue cysteine 238. Positions 239–241 are cleaved as a propeptide — removed in mature form; sequence VIL.

This sequence belongs to the small GTPase superfamily. Ras family. Interacts with farnesyltransferase beta subunit RAM1.

It localises to the cell membrane. Its activity is regulated as follows. Alternates between an inactive form bound to GDP and an active form bound to GTP. Activated by a guanine nucleotide-exchange factor (GEF) and inactivated by a GTPase-activating protein (GAP). Its function is as follows. Modulates the activity of the adenylate cyclase catalytic subunit and therefore affects the biosynthesis of cyclic-AMP. Plays a role in both surface attachment and surface recognition of appressoria, a highly specialized infection structure for plant penetration. Regulates appressorium formation by coordinated regulation of cAMP signaling and Pmk1 MAPK pathways. This chain is Ras-like protein 1, found in Pyricularia oryzae (strain 70-15 / ATCC MYA-4617 / FGSC 8958) (Rice blast fungus).